We begin with the raw amino-acid sequence, 311 residues long: Aspartate carbamoyltransferase catalytic subunit (311 aa).

The carbamoyl phosphate site is built by Arg55 and Thr56. L-aspartate is bound at residue Lys85. Residues Arg106, His135, and Gln138 each contribute to the carbamoyl phosphate site. L-aspartate-binding residues include Arg168 and Arg230. Residues Leu268 and Pro269 each contribute to the carbamoyl phosphate site.

Belongs to the aspartate/ornithine carbamoyltransferase superfamily. ATCase family. As to quaternary structure, heterododecamer (2C3:3R2) of six catalytic PyrB chains organized as two trimers (C3), and six regulatory PyrI chains organized as three dimers (R2).

The catalysed reaction is carbamoyl phosphate + L-aspartate = N-carbamoyl-L-aspartate + phosphate + H(+). The protein operates within pyrimidine metabolism; UMP biosynthesis via de novo pathway; (S)-dihydroorotate from bicarbonate: step 2/3. Catalyzes the condensation of carbamoyl phosphate and aspartate to form carbamoyl aspartate and inorganic phosphate, the committed step in the de novo pyrimidine nucleotide biosynthesis pathway. The sequence is that of Aspartate carbamoyltransferase catalytic subunit from Cronobacter sakazakii (strain ATCC BAA-894) (Enterobacter sakazakii).